A 306-amino-acid chain; its full sequence is MIVKAFSSSANLGAGYDILALAHDAFEDTIEIYAQNSSELDIKVEGNGVPLSIDKNSASFALLELLRSYDIKAKIRLKIIKGIPAGLGLGSSGASAAAAVYAANEIFKLNLSRQELVNFAMKGEIASSGSPHPDNVAASLVGGLVSVLNSNPVKVEQVPLNLEFQIILIIPFVRIEAKTKKAREMVPKQIDTSKYVTNARYLSSLLLGFIKGDRELVRLGLNDEIIEKAREPLFPHYPKIKEISLLYDAIGACVSGAGPTIAIFVDSKSDKNKILGESLNVCKAYGYECTYKIAKVSGGAWVERRD.

84 to 94 (PAGLGLGSSGA) serves as a coordination point for ATP.

This sequence belongs to the GHMP kinase family. Homoserine kinase subfamily.

It localises to the cytoplasm. It carries out the reaction L-homoserine + ATP = O-phospho-L-homoserine + ADP + H(+). It functions in the pathway amino-acid biosynthesis; L-threonine biosynthesis; L-threonine from L-aspartate: step 4/5. Its function is as follows. Catalyzes the ATP-dependent phosphorylation of L-homoserine to L-homoserine phosphate. In Sulfurisphaera tokodaii (strain DSM 16993 / JCM 10545 / NBRC 100140 / 7) (Sulfolobus tokodaii), this protein is Homoserine kinase.